The sequence spans 239 residues: uncharacterized protein (239 aa).

Positions 13-66 (IEYLVDKLNGPSEFARKTGVTLSTITRWRKGEADPSRSNLVKIAEVTGVSIEWL) constitute an HTH cro/C1-type domain. The segment at residues 24–43 (SEFARKTGVTLSTITRWRKG) is a DNA-binding region (H-T-H motif).

This is an uncharacterized protein from Haemophilus influenzae (strain ATCC 51907 / DSM 11121 / KW20 / Rd).